Reading from the N-terminus, the 312-residue chain is Serine/threonine-protein kinase ppk11 (312 aa).

The Protein kinase domain maps to 6 to 258 (YRDLQLIGQG…AEYLSKHKFI (253 aa)). ATP is bound by residues 12–20 (IGQGSFGSV) and Lys-35. Catalysis depends on Asp-127, which acts as the Proton acceptor.

The protein belongs to the protein kinase superfamily. Ser/Thr protein kinase family.

The protein resides in the cytoplasm. The protein localises to the nucleus. It catalyses the reaction L-seryl-[protein] + ATP = O-phospho-L-seryl-[protein] + ADP + H(+). It carries out the reaction L-threonyl-[protein] + ATP = O-phospho-L-threonyl-[protein] + ADP + H(+). This Schizosaccharomyces pombe (strain 972 / ATCC 24843) (Fission yeast) protein is Serine/threonine-protein kinase ppk11 (ppk11).